A 215-amino-acid polypeptide reads, in one-letter code: MTSAIEEEREILESIYPEEFKCINDSTFEITQPIDREESNCDNPPSLIFTCQLSEAYPDEVPDVKITFSEPHPWLGEEEIERLKQVVAQNAEECLGMAMIFSLCSVAKEETNAILIEQSQRETQAIEERHRKEAEQENKKFHGTPVTVESFTEWKKGFDAWRNEQLKLEQESKLKEALSAASSSNARKAILEKRMTGRELFENNLVKLDDVEGEA.

The region spanning 7 to 114 (EEREILESIY…SVAKEETNAI (108 aa)) is the RWD domain.

The protein localises to the cytoplasm. It is found in the nucleus. In Schizosaccharomyces pombe (strain 972 / ATCC 24843) (Fission yeast), this protein is RWD domain-containing protein C1393.09c.